The following is a 201-amino-acid chain: FMN-dependent NADH:quinone oxidoreductase (201 aa).

92–95 contributes to the FMN binding site; sequence MWNL.

This sequence belongs to the azoreductase type 1 family. In terms of assembly, homodimer. The cofactor is FMN.

The enzyme catalyses 2 a quinone + NADH + H(+) = 2 a 1,4-benzosemiquinone + NAD(+). It catalyses the reaction N,N-dimethyl-1,4-phenylenediamine + anthranilate + 2 NAD(+) = 2-(4-dimethylaminophenyl)diazenylbenzoate + 2 NADH + 2 H(+). Quinone reductase that provides resistance to thiol-specific stress caused by electrophilic quinones. Its function is as follows. Also exhibits azoreductase activity. Catalyzes the reductive cleavage of the azo bond in aromatic azo compounds to the corresponding amines. The sequence is that of FMN-dependent NADH:quinone oxidoreductase from Caldicellulosiruptor saccharolyticus (strain ATCC 43494 / DSM 8903 / Tp8T 6331).